An 88-amino-acid polypeptide reads, in one-letter code: MFTIDIIVKYTPVPFSIQRKSAEDAESTYEQIVESIRSGNPQILELTCEKIPEKKIAVVMSEVSGVQISQKSGAAATGRPPGFVTVAQ.

The protein belongs to the UPF0367 family.

In Trichodesmium erythraeum (strain IMS101), this protein is UPF0367 protein Tery_1229.